Here is a 206-residue protein sequence, read N- to C-terminus: KH domain-containing protein 3 (206 aa).

The segment at 1–40 is involved in RNA binding; sequence MDTPRRFPTLVQLMQPKAMPVEVLGHLPKRFSWFHSEFLK. The 64-residue stretch at 40–103 folds into the KH; atypical domain; that stretch reads KNPKVVRLEV…SYQEDTIKMI (64 aa). Over residues 144 to 153 the composition is skewed to basic and acidic residues; it reads GTQRSVEVRE. The disordered stretch occupies residues 144–206; the sequence is GTQRSVEVRE…EDTRAPVTRL (63 aa). The residue at position 145 (Thr145) is a Phosphothreonine. Residues 166 to 183 show a composition bias toward polar residues; it reads TGTQQSLEAANQSGTQRS. Ser171 is modified (phosphoserine).

Belongs to the KHDC1 family. In terms of assembly, component of the subcortical maternal complex (SCMC), at least composed of NLRP5, KHDC3L, OOEP, and TLE6. Within the complex, interacts with NLRP5, KHDC3L and TLE6. The SCMC may facilitate translocation of its components between the nuclear and cytoplasmic compartments. Forms a scaffold complex with OOEP/FLOPED, and interacts with BLM and TRIM25 at DNA replication forks. Interacts with PARP1; the interaction is increased following the formation of DNA double-strand breaks. Interacts with NUMA1.

The protein resides in the cytoplasm. It is found in the cell cortex. Its subcellular location is the nucleus. It localises to the mitochondrion. The protein localises to the cytoskeleton. The protein resides in the microtubule organizing center. It is found in the centrosome. Its subcellular location is the chromosome. Its function is as follows. Component of the subcortical maternal complex (SCMC), a multiprotein complex that plays a key role in early embryonic development. The SCMC complex is a structural constituent of cytoplasmic lattices, which consist in fibrous structures found in the cytoplasm of oocytes and preimplantation embryos. They are required to store maternal proteins critical for embryonic development, such as proteins that control epigenetic reprogramming of the preimplantation embryo, and prevent their degradation or activation. KHDC3 ensures proper spindle assembly by regulating the localization of AURKA via RHOA signaling and of PLK1 via a RHOA-independent process. Required for the localization of MAD2L1 to kinetochores to enable spindle assembly checkpoint function. As part of the OOEP-KHDC3 scaffold, recruits BLM and TRIM25 to DNA replication forks, thereby promoting the ubiquitination of BLM by TRIM25, enhancing BLM retainment at replication forks and therefore promoting stalled replication fork restart. Regulates homologous recombination-mediated DNA repair via recruitment of RAD51 to sites of DNA double-strand breaks, and sustainment of PARP1 activity, which in turn modulates downstream ATM or ATR activation. Activation of ATM or ATR in response to DNA double-strand breaks may be cell-type specific. Its role in DNA double-strand break repair is independent of its role in restarting stalled replication forks. Promotes neural stem cell neurogenesis and neuronal differentiation in the hippocampus. May regulate normal development of learning, memory and anxiety. Capable of binding RNA. The protein is KH domain-containing protein 3 (KHDC3L) of Macaca mulatta (Rhesus macaque).